A 331-amino-acid chain; its full sequence is Sulfate/thiosulfate import ATP-binding protein CysA (331 aa).

Residues 2 to 232 (ITVTNARKNY…PANEFVMSFL (231 aa)) enclose the ABC transporter domain. Residue 34–41 (GPSGSGKS) participates in ATP binding.

The protein belongs to the ABC transporter superfamily. Sulfate/tungstate importer (TC 3.A.1.6) family. The complex is composed of two ATP-binding proteins (CysA), two transmembrane proteins (CysT and CysW) and a solute-binding protein (CysP).

Its subcellular location is the cell membrane. It carries out the reaction sulfate(out) + ATP + H2O = sulfate(in) + ADP + phosphate + H(+). It catalyses the reaction thiosulfate(out) + ATP + H2O = thiosulfate(in) + ADP + phosphate + H(+). Part of the ABC transporter complex CysAWTP involved in sulfate/thiosulfate import. Responsible for energy coupling to the transport system. The sequence is that of Sulfate/thiosulfate import ATP-binding protein CysA from Nocardia farcinica (strain IFM 10152).